Consider the following 295-residue polypeptide: Excinuclease cho (295 aa).

A GIY-YIG domain is found at 33-108 (TRPGVYLFHG…IKEQQPLFNK (76 aa)).

In terms of biological role, incises the DNA at the 3' side of a lesion during nucleotide excision repair. Incises the DNA farther away from the lesion than UvrC. Not able to incise the 5' site of a lesion. In vitro, the incision activity of Cho is UvrA and UvrB dependent. When a lesion remains because UvrC is not able to induce the 3' incision, Cho incises the DNA. Then UvrC makes the 5' incision. The combined action of Cho and UvrC broadens the substrate range of nucleotide excision repair. This Escherichia coli (strain K12) protein is Excinuclease cho (cho).